A 492-amino-acid chain; its full sequence is UDP-glucosyl transferase 73DL1 (492 aa).

The Proton acceptor role is filled by His27. Asp131 acts as the Charge relay in catalysis. UDP is bound by residues Trp352, Val353, His370, Thr375, Glu378, and Tyr392.

The protein belongs to the UDP-glycosyltransferase family. Mainly expressed in flowers, flower buds and young leaves, and, to a lesser extent, in old leaves, stems and roots.

It participates in secondary metabolite biosynthesis; terpenoid biosynthesis. Component of the oleanane-type triterpene saponins (e.g. saponarioside A and saponarioside B) biosynthetic pathway, leading to the production of natural products with detergent properties used as traditional sources of soap. A glycosyltransferase that mediates the conversion of QA-mono to QA-di via the elongation of the C-3 sugar chain with a D-galactose. This Saponaria officinalis (Common soapwort) protein is UDP-glucosyl transferase 73DL1.